A 247-amino-acid polypeptide reads, in one-letter code: ATP synthase subunit a, chloroplastic (247 aa).

A run of 5 helical transmembrane segments spans residues glutamine 38–valine 58, valine 95–leucine 115, isoleucine 134–serine 154, leucine 199–leucine 219, and glycine 220–glycine 240.

This sequence belongs to the ATPase A chain family. As to quaternary structure, F-type ATPases have 2 components, CF(1) - the catalytic core - and CF(0) - the membrane proton channel. CF(1) has five subunits: alpha(3), beta(3), gamma(1), delta(1), epsilon(1). CF(0) has four main subunits: a, b, b' and c.

The protein localises to the plastid. It is found in the chloroplast thylakoid membrane. In terms of biological role, key component of the proton channel; it plays a direct role in the translocation of protons across the membrane. This chain is ATP synthase subunit a, chloroplastic, found in Populus alba (White poplar).